A 62-amino-acid chain; its full sequence is MKSCLINVSLLILLLLPILGYASVNAESIDGENDFEEERGFGCFRSCWKAGHDDKTCKSMCG.

The signal sequence occupies residues 1 to 26 (MKSCLINVSLLILLLLPILGYASVNA). Residues 27–38 (ESIDGENDFEEE) constitute a propeptide that is removed on maturation. Cystine bridges form between Cys43/Cys61 and Cys47/Cys57.

Belongs to the short scorpion toxin superfamily. Potassium channel inhibitor kappa-KTx family. Kappa-KTx 1 subfamily. In terms of tissue distribution, expressed by the venom gland.

Its subcellular location is the secreted. In terms of biological role, shows structural homology with WaTx suggesting that it acts as a cell-penetrating peptide (CPP) with defensive purpose that induces pain by specifically activating mammalian sensory neuron TRPA1 channels. Has no effect on the voltage-gated potassium channels tested. In Heterometrus petersii (Asian forest scorpion), this protein is Potassium channel toxin kappa-KTx 1.4.